The following is a 1196-amino-acid chain: FIP1[V]-like protein (1196 aa).

Disordered regions lie at residues 1-102 (MEED…TIPG), 117-248 (GVSQ…SHGY), 268-300 (GAASVGGPSSGQVRPPANLGPMAGRGRGDWRPL), 413-472 (GAQG…PRMR), and 485-1174 (SHED…IEGP). Residues 18-31 (FQPPVVLPPPPPLP) are compositionally biased toward pro residues. Polar residues predominate over residues 117–126 (GVSQVTTRIE). The segment covering 129–141 (VGGGGDGGYGGQG) has biased composition (gly residues). 2 stretches are compositionally biased toward acidic residues: residues 142 to 154 (EGDDWDSDSEDDL) and 179 to 190 (NEDDDDEDDEDP). Residues 226-236 (AGKGSGPGGAT) show a composition bias toward gly residues. Over residues 268-278 (GAASVGGPSSG) the composition is skewed to low complexity. Basic and acidic residues predominate over residues 518–548 (KRPDTESAEHSPAQDEPHKNLLKKQDDEISR). Residues 549 to 561 (STDSGQSFRSSSP) are compositionally biased toward polar residues. Composition is skewed to basic and acidic residues over residues 565–592 (RGTRSSSVDREDVGGEAGKDAEMGEELK) and 608–641 (GESKTERSSESSKARSGSHRDFQQEEDVIQDKHS). Over residues 643 to 657 (RPANNRKQYDNNAPH) the composition is skewed to polar residues. Composition is skewed to basic and acidic residues over residues 661-673 (KNQDRGKEMERTR), 699-802 (SRED…EKNE), 810-918 (SMSR…DTLR), 925-945 (RRDYPGEESSSHHRGHEDFSA), and 953-971 (NEKKPRQERTGAKIDKFID). Short sequence motifs (nuclear localization signal) lie at residues 704–711 (DKRKERDV) and 734–741 (RKRDREDD). The segment covering 998 to 1021 (ESLSKQGEQNGSSVVTGSKGTNDA) has biased composition (polar residues). Composition is skewed to basic and acidic residues over residues 1046–1071 (DEIHDSKRGRTKLERWASHKEREDAV), 1103–1137 (KSRDVTEEKIGHDLADTKDGSEKGPGDRHLDTVEK), and 1151–1163 (TEKDTTGVKKMES).

It belongs to the FIP1 family. Component of the cleavage and polyadenylation specificity factor (CPSF) complex. Forms a complex with cleavage and polyadenylation specificity factor (CPSF) subunits CFIS1, CFIS2, CPSF30, CSTF50, CSTF64, CSTF77, FIPS3, PABN1, PABN2, PABN3, PAPS4, CFIM25 and PABN1. Binds RNA. As to expression, expressed in leaves, stems, flower tissues and roots.

The protein localises to the nucleus. Its function is as follows. Essential gene. Component of the cleavage and polyadenylation specificity factor (CPSF) complex that plays a key role in pre-mRNA 3'-end formation, recognizing the AAUAAA signal sequence and interacting with poly(A) polymerase and other factors to bring about cleavage and poly(A) addition. FIP1L1 contributes to poly(A) site recognition and stimulates poly(A) addition. Binds to U-rich RNA sequence elements surrounding the poly(A) site. May act to tether poly(A) polymerase to the CPSF complex. This is FIP1[V]-like protein from Arabidopsis thaliana (Mouse-ear cress).